The sequence spans 737 residues: NAD-dependent protein deacetylase sirtuin-1 (737 aa).

A compositionally biased stretch (low complexity) spans 1–28 (MADEVALALQAAGSPSAAAAMEAASQPA). Disordered stretches follow at residues 1 to 56 (MADE…AVAP) and 75 to 125 (EAAG…EAAA). Ala-2 carries the N-acetylalanine modification. Positions 2–131 (ADEVALALQA…EAAAAAAAAA (130 aa)) are interaction with CLOCK. Positions 2 to 268 (ADEVALALQA…SCGIPDFRSR (267 aa)) are interaction with H1-4. 2 positions are modified to phosphoserine: Ser-14 and Ser-25. The Nuclear localization signal motif lies at 32–39 (LRKRPRRD). Ser-46 is subject to Phosphoserine; by MAPK8. Low complexity-rich tracts occupy residues 46–56 (SPGEPSAAVAP) and 75–94 (EAAG…AVAG). Residues 111 to 123 (DFDDDEGEEEDEA) show a composition bias toward acidic residues. The interval 135–533 (RDNLLLTDGL…LHISEDSSSP (399 aa)) is interaction with CCAR2. The short motif at 138–145 (LLLTDGLL) is the Nuclear export signal element. A phosphoserine mark is found at Ser-151, Ser-154, Ser-164, and Ser-165. The interval 152-171 (CESDDDDRTSHASSSDWTPR) is disordered. The Nuclear localization signal motif lies at 223–230 (PPKRKKRK). The Deacetylase sirtuin-type domain occupies 228 to 488 (KRKDINTIED…NELCHRLGGE (261 aa)). Lys-230 bears the N6-acetyllysine mark. The required for interaction with the sumoylated form of CCAR2 stretch occupies residues 248 to 251 (IIVL). NAD(+) is bound by residues 253-272 (GAGV…DGIY) and 337-340 (QNID). The active-site Proton acceptor is His-355. Cys-363 and Cys-366 together coordinate Zn(2+). Lys-369 bears the N6-acetyllysine mark. Zn(2+) contacts are provided by Cys-387 and Cys-390. 2 positions are modified to S-nitrosocysteine: Cys-387 and Cys-390. Lys-422 is subject to N6-acetyllysine. The Nuclear export signal motif lies at 425-431 (VDLLIVI). Residues 432–434 (GSS), 457–459 (NRE), and Cys-474 each bind NAD(+). N6-acetyllysine is present on Lys-505. The disordered stretch occupies residues 514-539 (VHLSELPPTPLHISEDSSSPERTVPQ). Thr-522 bears the Phosphothreonine; by DYRK1A, DYRK3 and MAPK8 mark. Ser-527 is modified (phosphoserine). The span at 529 to 539 (DSSSPERTVPQ) shows a compositional bias: polar residues. Thr-536 is modified (phosphothreonine). Lys-600 is subject to N6-acetyllysine. Phosphoserine; by CaMK2 occurs at positions 649 and 651. Positions 653–713 (DDVLSSSSCG…GSGFGADGGD (61 aa)) are disordered. Low complexity predominate over residues 656–676 (LSSSSCGSNSDSGTCQSPSLE). Acidic residues predominate over residues 677–697 (EPLEDESEIEEFYNGLEDDTE). Ser-737 carries the post-translational modification Phosphoserine.

It belongs to the sirtuin family. Class I subfamily. Interacts with XBP1 isoform 2. Found in a complex with PCAF and MYOD1 Component of the eNoSC complex, composed of SIRT1, SUV39H1 and RRP8. Interacts with HES1, HEY2 and PML. Interacts with RPS19BP1/AROS. Interacts with CCAR2 (via N-terminus); the interaction disrupts the interaction between SIRT1 and p53/TP53. Interacts with SETD7; the interaction induces the dissociation of SIRT1 from p53/TP53 and increases p53/TP53 activity. Interacts with MYCN, NR1I2, CREBZF, TSC2, TLE1, FOS, JUN, NR0B2, PPARG, NCOR, IRS1, IRS2 and NMNAT1. Interacts with HNF1A; the interaction occurs under nutrient restriction. Interacts with SUZ12; the interaction mediates the association with the PRC4 histone methylation complex which is specific as an association with PCR2 and PCR3 complex variants is not found. Interacts with FOXO1; the interaction deacetylates FOXO1, enhances its DNA-binding ability and increases its transcriptional activity. Interacts with BCL6; leads to a epigenetic repression of specific target genes. Interacts with CLOCK, BMAL1 and PER2. Interacts with PPARA; the interaction seems to be modulated by NAD(+) levels. Interacts with NR1H3 and this interaction is inhibited in the presence of CCAR2. Interacts with CHEK2 and p53/TP53. Exhibits a preferential interaction with sumoylated CCAR2 over its unmodified form. Interacts with PACS2. Interacts with SIRT7. Interacts with PUS7. Interacts with TULP3. Interacts with MORN3; the interaction enhances the ubiquitination of p53/TP53. Zn(2+) is required as a cofactor. In terms of processing, methylated on multiple lysine residues; methylation is enhanced after DNA damage and is dispensable for deacetylase activity toward p53/TP53. Phosphorylated. Phosphorylated by STK4/MST1, resulting in inhibition of SIRT1-mediated p53/TP53 deacetylation. Phosphorylation by MAPK8/JNK1 at Ser-46 and Thr-522 leads to increased nuclear localization and enzymatic activity. Phosphorylation at Thr-522 by DYRK1A and DYRK3 activates deacetylase activity and promotes cell survival. Phosphorylation by mammalian target of rapamycin complex 1 (mTORC1) at Ser-46 inhibits deacetylation activity. Phosphorylated by CaMK2, leading to increased p53/TP53 and NF-kappa-B p65/RELA deacetylation activity. Post-translationally, proteolytically cleaved by cathepsin B upon TNF-alpha treatment to yield catalytic inactive but stable SirtT1 75 kDa fragment (75SirT1). In terms of processing, S-nitrosylated by GAPDH, leading to inhibit the NAD-dependent protein deacetylase activity. Acetylated at various Lys residues. Deacetylated via an autocatalytic mechanism. Autodeacetylation at Lys-230 promotes its protein deacetylase activity. Post-translationally, ubiquitinated; leading to degradation. Deubiquitinated by USP22; leading to stabilization. Widely expressed. Weakly expressed in liver and skeletal muscle.

Its subcellular location is the nucleus. The protein resides in the PML body. It localises to the cytoplasm. The protein localises to the mitochondrion. The catalysed reaction is N(6)-acetyl-L-lysyl-[protein] + NAD(+) + H2O = 2''-O-acetyl-ADP-D-ribose + nicotinamide + L-lysyl-[protein]. The enzyme catalyses N(6)-propanoyl-L-lysyl-[protein] + NAD(+) + H2O = 3''-O-propanoyl-ADP-D-ribose + nicotinamide + L-lysyl-[protein]. It catalyses the reaction N(6)-(2E)-butenoyl-L-lysyl-[protein] + NAD(+) + H2O = 2''-O-(2E)-but-2-enoyl-ADP-D-ribose + nicotinamide + L-lysyl-[protein]. It carries out the reaction N(6)-[(S)-lactoyl]-L-lysyl-[protein] + NAD(+) + H2O = 2''-O-(S)-lactoyl-ADP-D-ribose + nicotinamide + L-lysyl-[protein]. Its activity is regulated as follows. Activated by resveratrol (3,5,4'-trihydroxy-trans-stilbene), butein (3,4,2',4'-tetrahydroxychalcone), piceatannol (3,5,3',4'-tetrahydroxy-trans-stilbene), Isoliquiritigenin (4,2',4'-trihydroxychalcone), fisetin (3,7,3',4'-tetrahydroxyflavone) and quercetin (3,5,7,3',4'-pentahydroxyflavone). MAPK8/JNK1 and RPS19BP1/AROS act as positive regulators of deacetylation activity. Inhibited by nicotinamide. Negatively regulated by CCAR2. Functionally, NAD-dependent protein deacetylase that links transcriptional regulation directly to intracellular energetics and participates in the coordination of several separated cellular functions such as cell cycle, response to DNA damage, metabolism, apoptosis and autophagy. Can modulate chromatin function through deacetylation of histones and can promote alterations in the methylation of histones and DNA, leading to transcriptional repression. Deacetylates a broad range of transcription factors and coregulators, thereby regulating target gene expression positively and negatively. Serves as a sensor of the cytosolic ratio of NAD(+)/NADH which is altered by glucose deprivation and metabolic changes associated with caloric restriction. Is essential in skeletal muscle cell differentiation and in response to low nutrients mediates the inhibitory effect on skeletal myoblast differentiation which also involves 5'-AMP-activated protein kinase (AMPK) and nicotinamide phosphoribosyltransferase (NAMPT). Component of the eNoSC (energy-dependent nucleolar silencing) complex, a complex that mediates silencing of rDNA in response to intracellular energy status and acts by recruiting histone-modifying enzymes. The eNoSC complex is able to sense the energy status of cell: upon glucose starvation, elevation of NAD(+)/NADP(+) ratio activates SIRT1, leading to histone H3 deacetylation followed by dimethylation of H3 at 'Lys-9' (H3K9me2) by SUV39H1 and the formation of silent chromatin in the rDNA locus. Deacetylates 'Lys-266' of SUV39H1, leading to its activation. Inhibits skeletal muscle differentiation by deacetylating PCAF and MYOD1. Deacetylates H2A and 'Lys-26' of H1-4. Deacetylates 'Lys-16' of histone H4 (in vitro). Involved in NR0B2/SHP corepression function through chromatin remodeling: Recruited to LRH1 target gene promoters by NR0B2/SHP thereby stimulating histone H3 and H4 deacetylation leading to transcriptional repression. Proposed to contribute to genomic integrity via positive regulation of telomere length; however, reports on localization to pericentromeric heterochromatin are conflicting. Proposed to play a role in constitutive heterochromatin (CH) formation and/or maintenance through regulation of the available pool of nuclear SUV39H1. Upon oxidative/metabolic stress decreases SUV39H1 degradation by inhibiting SUV39H1 polyubiquitination by MDM2. This increase in SUV39H1 levels enhances SUV39H1 turnover in CH, which in turn seems to accelerate renewal of the heterochromatin which correlates with greater genomic integrity during stress response. Deacetylates 'Lys-382' of p53/TP53 and impairs its ability to induce transcription-dependent proapoptotic program and modulate cell senescence. Deacetylates TAF1B and thereby represses rDNA transcription by the RNA polymerase I. Deacetylates MYC, promotes the association of MYC with MAX and decreases MYC stability leading to compromised transformational capability. Deacetylates FOXO3 in response to oxidative stress thereby increasing its ability to induce cell cycle arrest and resistance to oxidative stress but inhibiting FOXO3-mediated induction of apoptosis transcriptional activity; also leading to FOXO3 ubiquitination and protesomal degradation. Appears to have a similar effect on MLLT7/FOXO4 in regulation of transcriptional activity and apoptosis. Deacetylates DNMT1; thereby impairs DNMT1 methyltransferase-independent transcription repressor activity, modulates DNMT1 cell cycle regulatory function and DNMT1-mediated gene silencing. Deacetylates RELA/NF-kappa-B p65 thereby inhibiting its transactivating potential and augments apoptosis in response to TNF-alpha. Deacetylates HIF1A, KAT5/TIP60, RB1 and HIC1. Deacetylates FOXO1, which increases its DNA binding ability and enhances its transcriptional activity leading to increased gluconeogenesis in liver. Inhibits E2F1 transcriptional activity and apoptotic function, possibly by deacetylation. Involved in HES1- and HEY2-mediated transcriptional repression. In cooperation with MYCN seems to be involved in transcriptional repression of DUSP6/MAPK3 leading to MYCN stabilization by phosphorylation at 'Ser-62'. Deacetylates MEF2D. Required for antagonist-mediated transcription suppression of AR-dependent genes which may be linked to local deacetylation of histone H3. Represses HNF1A-mediated transcription. Required for the repression of ESRRG by CREBZF. Deacetylates NR1H3 and NR1H2 and deacetylation of NR1H3 at 'Lys-434' positively regulates transcription of NR1H3:RXR target genes, promotes NR1H3 proteasomal degradation and results in cholesterol efflux; a promoter clearing mechanism after reach round of transcription is proposed. Involved in lipid metabolism: deacetylates LPIN1, thereby inhibiting diacylglycerol synthesis. Implicated in regulation of adipogenesis and fat mobilization in white adipocytes by repression of PPARG which probably involves association with NCOR1 and SMRT/NCOR2. Deacetylates p300/EP300 and PRMT1. Deacetylates ACSS2 leading to its activation, and HMGCS1 deacetylation. Involved in liver and muscle metabolism. Through deacetylation and activation of PPARGC1A is required to activate fatty acid oxidation in skeletal muscle under low-glucose conditions and is involved in glucose homeostasis. Involved in regulation of PPARA and fatty acid beta-oxidation in liver. Involved in positive regulation of insulin secretion in pancreatic beta cells in response to glucose; the function seems to imply transcriptional repression of UCP2. Proposed to deacetylate IRS2 thereby facilitating its insulin-induced tyrosine phosphorylation. Deacetylates SREBF1 isoform SREBP-1C thereby decreasing its stability and transactivation in lipogenic gene expression. Involved in DNA damage response by repressing genes which are involved in DNA repair, such as XPC and TP73, deacetylating XRCC6/Ku70, and facilitating recruitment of additional factors to sites of damaged DNA, such as SIRT1-deacetylated NBN can recruit ATM to initiate DNA repair and SIRT1-deacetylated XPA interacts with RPA2. Also involved in DNA repair of DNA double-strand breaks by homologous recombination and specifically single-strand annealing independently of XRCC6/Ku70 and NBN. Promotes DNA double-strand breaks by mediating deacetylation of SIRT6. Transcriptional suppression of XPC probably involves an E2F4:RBL2 suppressor complex and protein kinase B (AKT) signaling. Transcriptional suppression of TP73 probably involves E2F4 and PCAF. Deacetylates WRN thereby regulating its helicase and exonuclease activities and regulates WRN nuclear translocation in response to DNA damage. Deacetylates APEX1 at 'Lys-6' and 'Lys-7' and stimulates cellular AP endonuclease activity by promoting the association of APEX1 to XRCC1. Catalyzes deacetylation of ERCC4/XPF, thereby impairing interaction with ERCC1 and nucleotide excision repair (NER). Increases p53/TP53-mediated transcription-independent apoptosis by blocking nuclear translocation of cytoplasmic p53/TP53 and probably redirecting it to mitochondria. Deacetylates XRCC6/Ku70 at 'Lys-537' and 'Lys-540' causing it to sequester BAX away from mitochondria thereby inhibiting stress-induced apoptosis. Is involved in autophagy, presumably by deacetylating ATG5, ATG7 and MAP1LC3B/ATG8. Deacetylates AKT1 which leads to enhanced binding of AKT1 and PDK1 to PIP3 and promotes their activation. Proposed to play role in regulation of STK11/LBK1-dependent AMPK signaling pathways implicated in cellular senescence which seems to involve the regulation of the acetylation status of STK11/LBK1. Can deacetylate STK11/LBK1 and thereby increase its activity, cytoplasmic localization and association with STRAD; however, the relevance of such activity in normal cells is unclear. In endothelial cells is shown to inhibit STK11/LBK1 activity and to promote its degradation. Deacetylates SMAD7 at 'Lys-64' and 'Lys-70' thereby promoting its degradation. Deacetylates CIITA and augments its MHC class II transactivation and contributes to its stability. Deacetylates MECOM/EVI1. Deacetylates PML at 'Lys-487' and this deacetylation promotes PML control of PER2 nuclear localization. During the neurogenic transition, represses selective NOTCH1-target genes through histone deacetylation in a BCL6-dependent manner and leading to neuronal differentiation. Regulates the circadian expression of several core clock genes, including BMAL1, RORC, PER2 and CRY1 and plays a critical role in maintaining a controlled rhythmicity in histone acetylation, thereby contributing to circadian chromatin remodeling. Deacetylates BMAL1 and histones at the circadian gene promoters in order to facilitate repression by inhibitory components of the circadian oscillator. Deacetylates PER2, facilitating its ubiquitination and degradation by the proteasome. Protects cardiomyocytes against palmitate-induced apoptosis. Deacetylates XBP1 isoform 2; deacetylation decreases protein stability of XBP1 isoform 2 and inhibits its transcriptional activity. Deacetylates PCK1 and directs its activity toward phosphoenolpyruvate production promoting gluconeogenesis. Involved in the CCAR2-mediated regulation of PCK1 and NR1D1. Deacetylates CTNB1 at 'Lys-49'. In POMC (pro-opiomelanocortin) neurons, required for leptin-induced activation of PI3K signaling. Deacetylates SOX9; promoting SOX9 nuclear localization and transactivation activity. Involved in the regulation of centrosome duplication: Deacetylates CENATAC in G1 phase, allowing for SASS6 accumulation on the centrosome and subsequent procentriole assembly. Deacetylates NDC80/HEC1. In addition to protein deacetylase activity, also acts as a protein-lysine deacylase by mediating protein delactylation, depropionylation and decrotonylation. Mediates depropionylation of Osterix (SP7). Catalyzes decrotonylation of histones; it however does not represent a major histone decrotonylase. Mediates protein delactylation of TEAD1 and YAP1. Its function is as follows. Deacetylates 'Lys-382' of p53/TP53, however with lower activity than isoform 1. In combination, the two isoforms exert an additive effect. Isoform 2 regulates p53/TP53 expression and cellular stress response and is in turn repressed by p53/TP53 presenting a SIRT1 isoform-dependent auto-regulatory loop. In terms of biological role, catalytically inactive 75SirT1 may be involved in regulation of apoptosis. May be involved in protecting chondrocytes from apoptotic death by associating with cytochrome C and interfering with apoptosome assembly. This is NAD-dependent protein deacetylase sirtuin-1 (Sirt1) from Mus musculus (Mouse).